Reading from the N-terminus, the 316-residue chain is Protoheme IX farnesyltransferase (316 aa).

The next 9 helical transmembrane spans lie at 32–52, 53–73, 98–118, 120–140, 153–173, 180–200, 226–246, 251–271, and 280–300; these read VMSL…THVN, PIIG…SGAL, VARE…VITL, FVAN…YVVI, IVIG…AVAG, LALF…LALV, ILLY…IGFA, GLLS…VYLA, and VAMR…AAIV.

Belongs to the UbiA prenyltransferase family. Protoheme IX farnesyltransferase subfamily.

The protein localises to the cell inner membrane. It catalyses the reaction heme b + (2E,6E)-farnesyl diphosphate + H2O = Fe(II)-heme o + diphosphate. It functions in the pathway porphyrin-containing compound metabolism; heme O biosynthesis; heme O from protoheme: step 1/1. In terms of biological role, converts heme B (protoheme IX) to heme O by substitution of the vinyl group on carbon 2 of heme B porphyrin ring with a hydroxyethyl farnesyl side group. The polypeptide is Protoheme IX farnesyltransferase (Methylocella silvestris (strain DSM 15510 / CIP 108128 / LMG 27833 / NCIMB 13906 / BL2)).